Reading from the N-terminus, the 243-residue chain is Protein canopy homolog 3 (243 aa).

Residues 1-15 form the signal peptide; sequence MWFLFLLLPLWAGCA. Residues 27–236 form the Saposin B-type domain; that stretch reads SKCEVCKYVA…KEEKKQMDQP (210 aa). Disulfide bonds link Cys-29/Cys-188, Cys-32/Cys-176, and Cys-86/Cys-148. Residues 136–160 adopt a coiled-coil conformation; that stretch reads ETSAEVADMKKQCDVMMENYEEVIE. The tract at residues 186–243 is disordered; the sequence is QSCLSEQGDSRKGDTGPSTGTKKQKKQGEKKNKSKKQNSGSKEEKKQMDQPMAAKEEL. A compositionally biased stretch (basic and acidic residues) spans 226-243; sequence SKEEKKQMDQPMAAKEEL.

This sequence belongs to the canopy family.

It is found in the endoplasmic reticulum. Its function is as follows. Toll-like receptor (TLR)-specific co-chaperone for HSP90B1. Required for proper TLR folding and hence controls TLR exit from the endoplasmic reticulum. Consequently, required for immune responses. This chain is Protein canopy homolog 3 (cnpy3), found in Xenopus laevis (African clawed frog).